Reading from the N-terminus, the 446-residue chain is UDP-N-acetylmuramoylalanine--D-glutamate ligase (446 aa).

An ATP-binding site is contributed by 115–121 (GTNGKTT).

It belongs to the MurCDEF family.

Its subcellular location is the cytoplasm. The enzyme catalyses UDP-N-acetyl-alpha-D-muramoyl-L-alanine + D-glutamate + ATP = UDP-N-acetyl-alpha-D-muramoyl-L-alanyl-D-glutamate + ADP + phosphate + H(+). Its pathway is cell wall biogenesis; peptidoglycan biosynthesis. In terms of biological role, cell wall formation. Catalyzes the addition of glutamate to the nucleotide precursor UDP-N-acetylmuramoyl-L-alanine (UMA). This is UDP-N-acetylmuramoylalanine--D-glutamate ligase from Pelobacter propionicus (strain DSM 2379 / NBRC 103807 / OttBd1).